A 776-amino-acid chain; its full sequence is Calcium-independent phospholipase A2-gamma (776 aa).

N4 and N157 each carry an N-linked (GlcNAc...) asparagine glycan. Disordered regions lie at residues 216-276 (KGKM…HPVS) and 306-334 (KLKSDPKSPPEEQEVSAKTEQAVNKDKKA). Composition is skewed to basic and acidic residues over residues 221–239 (QTKEDKQLQDKPDLEERKS) and 247–263 (VADRPDSESPLEVKDKL). One can recognise a PNPLA domain in the interval 439 to 634 (LTIDGGGTRG…LLNNPSALAL (196 aa)). The GXGXXG motif lies at 443–448 (GGGTRG). A helical membrane pass occupies residues 469-489 (LFDYICGVSTGAILAFMLGLF). Residues 475–479 (GVSTG) carry the GXSXG motif. The active-site Nucleophile is the S477. Catalysis depends on D621, which acts as the Proton acceptor. The short motif at 621–623 (DGG) is the DGA/G element. N6-succinyllysine is present on K730.

As to expression, expressed in myocardium (at protein level).

Its subcellular location is the endoplasmic reticulum membrane. It is found in the mitochondrion membrane. The protein resides in the peroxisome membrane. It catalyses the reaction a 1,2-diacyl-sn-glycero-3-phosphocholine + H2O = a 1-acyl-sn-glycero-3-phosphocholine + a fatty acid + H(+). The catalysed reaction is a 1,2-diacyl-sn-glycero-3-phosphocholine + H2O = a 2-acyl-sn-glycero-3-phosphocholine + a fatty acid + H(+). It carries out the reaction a 1,2-diacyl-sn-glycero-3-phosphoethanolamine + H2O = a 1-acyl-sn-glycero-3-phosphoethanolamine + a fatty acid + H(+). The enzyme catalyses a 1-O-(1Z-alkenyl)-2-acyl-sn-glycero-3-phosphocholine + H2O = a 1-O-(1Z-alkenyl)-sn-glycero-3-phosphocholine + a fatty acid + H(+). It catalyses the reaction a 1-acyl-sn-glycero-3-phosphocholine + H2O = sn-glycerol 3-phosphocholine + a fatty acid + H(+). The catalysed reaction is 1-hexadecanoyl-2-(5Z,8Z,11Z,14Z-eicosatetraenoyl)-sn-glycero-3-phosphocholine + H2O = 2-(5Z,8Z,11Z,14Z)-eicosatetraenoyl-sn-glycero-3-phosphocholine + hexadecanoate + H(+). It carries out the reaction 1-acyl-2-(9Z,12Z)-octadecadienoyl-sn-glycero-3-phosphocholine + H2O = a 1-acyl-sn-glycero-3-phosphocholine + (9Z,12Z)-octadecadienoate + H(+). The enzyme catalyses 1-acyl-2-(5Z,8Z,11Z,14Z-eicosatetraenoyl)-sn-glycero-3-phosphocholine + H2O = a 1-acyl-sn-glycero-3-phosphocholine + (5Z,8Z,11Z,14Z)-eicosatetraenoate + H(+). It catalyses the reaction 1-hexadecanoyl-2-(5Z,8Z,11Z,14Z-eicosatetraenoyl)-sn-glycero-3-phosphocholine + H2O = 1-hexadecanoyl-sn-glycero-3-phosphocholine + (5Z,8Z,11Z,14Z)-eicosatetraenoate + H(+). The catalysed reaction is 1-octadecanoyl-2-(9Z-octadecenoyl)-sn-glycero-3-phosphocholine + H2O = 1-octadecanoyl-sn-glycero-3-phosphocholine + (9Z)-octadecenoate + H(+). It carries out the reaction 1-hexadecanoyl-2-(9Z-octadecenoyl)-sn-glycero-3-phosphocholine + H2O = 1-hexadecanoyl-sn-glycero-3-phosphocholine + (9Z)-octadecenoate + H(+). The enzyme catalyses 1-hexadecanoyl-2-(9Z,12Z-octadecadienoyl)-sn-glycero-3-phosphocholine + H2O = (9Z,12Z)-octadecadienoate + 1-hexadecanoyl-sn-glycero-3-phosphocholine + H(+). It catalyses the reaction 1-acyl-2-(9Z,12Z)-octadecadienoyl-sn-glycero-3-phosphoethanolamine + H2O = a 1-acyl-sn-glycero-3-phosphoethanolamine + (9Z,12Z)-octadecadienoate + H(+). The catalysed reaction is 1-acyl-2-(5Z,8Z,11Z,14Z)-eicosatetraenoyl-sn-glycero-3-phosphoethanolamine + H2O = a 1-acyl-sn-glycero-3-phosphoethanolamine + (5Z,8Z,11Z,14Z)-eicosatetraenoate + H(+). It carries out the reaction 1-hexadecanoyl-2-(5Z,8Z,11Z,14Z-eicosatetraenoyl)-sn-glycero-3-phosphoethanolamine + H2O = 1-hexadecanoyl-sn-glycero-3-phosphoethanolamine + (5Z,8Z,11Z,14Z)-eicosatetraenoate + H(+). The enzyme catalyses 1-octadecanoyl-2-(9Z-octadecenoyl)-sn-glycero-3-phosphocholine + H2O = 2-(9Z-octadecenoyl)-sn-glycero-3-phosphocholine + octadecanoate + H(+). It catalyses the reaction 1-hexadecanoyl-2-(4Z,7Z,10Z,13Z,16Z,19Z-docosahexaenoyl)-sn-glycero-3-phosphocholine + H2O = 2-(4Z,7Z,10Z,13Z,16Z,19Z-docosahexaenoyl)-sn-glycero-3-phosphocholine + hexadecanoate + H(+). The catalysed reaction is 1-O-(1Z)-hexadecenyl-2 (5Z,8Z,11Z,14Z)-eicosatetraenoyl-sn-glycero-3-phosphocholine + H2O = 1-(1Z-hexadecenyl)-sn-glycero-3-phosphocholine + (5Z,8Z,11Z,14Z)-eicosatetraenoate + H(+). It carries out the reaction 1-O-(1Z-hexadecenyl)-2-(9Z-octadecenoyl)-sn-glycero-3-phosphocholine + H2O = 1-(1Z-hexadecenyl)-sn-glycero-3-phosphocholine + (9Z)-octadecenoate + H(+). The enzyme catalyses 1-hexadecanoyl-sn-glycero-3-phosphocholine + H2O = sn-glycerol 3-phosphocholine + hexadecanoate + H(+). It catalyses the reaction 1',3'-bis-[1,2-di-(9Z,12Z-octadecadienoyl)-sn-glycero-3-phospho]-glycerol + H2O = 1'-[1,2-di-(9Z,12Z-octadecadienoyl)-sn-glycero-3-phospho]-3'-[1-(9Z,12Z-octadecadienoyl)-sn-glycero-3-phospho]-glycerol + (9Z,12Z)-octadecadienoate + H(+). The catalysed reaction is 1'-[1-acyl-2-(9-hydroxy-(10E,12Z)-octadecadienoyl)-sn-glycero-3-phospho]-3'-[1,2-diacyl-sn-glycero-3-phospho]-glycerol + H2O = 9-hydroxy-(10E,12Z)-octadecadienoate + 1'-[1,2-diacyl-sn-glycero-3-phospho],3'-[1-acyl-sn-glycero-3-phospho]-glycerol + H(+). Its pathway is phospholipid metabolism. With respect to regulation, calcium-independent phospholipase. In terms of biological role, calcium-independent and membrane-bound phospholipase, that catalyzes the esterolytic cleavage of fatty acids from glycerophospholipids to yield free fatty acids and lysophospholipids, hence regulating membrane physical properties and the release of lipid second messengers and growth factors. Hydrolyzes phosphatidylethanolamine, phosphatidylcholine and probably phosphatidylinositol with a possible preference for the former. Also has a broad substrate specificity in terms of fatty acid moieties, hydrolyzing saturated and mono-unsaturated fatty acids at nearly equal rates from either the sn-1 or sn-2 position in diacyl phosphatidylcholine. However, has a weak activity toward polyunsaturated fatty acids at the sn-2 position, and thereby favors the production of 2-arachidonoyl lysophosphatidylcholine, a key branch point metabolite in eicosanoid signaling. On the other hand, can produce arachidonic acid from the sn-1 position of diacyl phospholipid and from the sn-2 position of arachidonate-containing plasmalogen substrates. Therefore, plays an important role in the mobilization of arachidonic acid in response to cellular stimuli and the generation of lipid second messengers. Can also hydrolyze lysophosphatidylcholine. In the mitochondrial compartment, catalyzes the hydrolysis and release of oxidized aliphatic chains from cardiolipin and integrates mitochondrial bioenergetics and signaling. It is essential for maintaining efficient bioenergetic mitochondrial function through tailoring mitochondrial membrane lipid metabolism and composition. The chain is Calcium-independent phospholipase A2-gamma from Mus musculus (Mouse).